We begin with the raw amino-acid sequence, 126 residues long: NADH-quinone oxidoreductase subunit A (126 aa).

3 helical membrane-spanning segments follow: residues 14 to 34 (FLYF…TSWF), 66 to 86 (FYLI…LYAW), and 96 to 116 (IGFV…FYLV).

It belongs to the complex I subunit 3 family. In terms of assembly, NDH-1 is composed of 13 different subunits. Subunits NuoA, H, J, K, L, M, N constitute the membrane sector of the complex.

The protein resides in the cell membrane. The catalysed reaction is a quinone + NADH + 5 H(+)(in) = a quinol + NAD(+) + 4 H(+)(out). NDH-1 shuttles electrons from NADH, via FMN and iron-sulfur (Fe-S) centers, to quinones in the respiratory chain. The immediate electron acceptor for the enzyme in this species is believed to be ubiquinone. Couples the redox reaction to proton translocation (for every two electrons transferred, four hydrogen ions are translocated across the cytoplasmic membrane), and thus conserves the redox energy in a proton gradient. The chain is NADH-quinone oxidoreductase subunit A from Buchnera aphidicola subsp. Schizaphis graminum (strain Sg).